A 292-amino-acid polypeptide reads, in one-letter code: 5,10-methylenetetrahydrofolate reductase (292 aa).

Glu26 (proton donor/acceptor) is an active-site residue. Residue Thr57 participates in NADH binding. Tyr58, Ala60, His86, Arg116, Gly117, Asp118, Ala130, Tyr150, His154, Ala157, Asp163, Asn166, Arg169, and Lys170 together coordinate FAD. A (6S)-5-methyl-5,6,7,8-tetrahydrofolate-binding site is contributed by Asp118. Gln181 contacts NADH. (6S)-5-methyl-5,6,7,8-tetrahydrofolate-binding residues include Gln181, Gln217, and Arg277.

The protein belongs to the methylenetetrahydrofolate reductase family. FAD serves as cofactor.

The catalysed reaction is (6S)-5-methyl-5,6,7,8-tetrahydrofolate + NAD(+) = (6R)-5,10-methylene-5,6,7,8-tetrahydrofolate + NADH + H(+). It participates in one-carbon metabolism; tetrahydrofolate interconversion. The protein operates within amino-acid biosynthesis; L-methionine biosynthesis via de novo pathway. Its function is as follows. Catalyzes the NADH-dependent reduction of 5,10-methylenetetrahydrofolate to 5-methyltetrahydrofolate. Is required to provide the methyl group necessary for methionine synthetase to convert homocysteine to methionine; the methyl group is given by 5-methyltetrahydrofolate. This is 5,10-methylenetetrahydrofolate reductase (metF) from Neisseria meningitidis serogroup B (strain ATCC BAA-335 / MC58).